Reading from the N-terminus, the 1011-residue chain is Probable beta-galactosidase E (1011 aa).

Residues 1-19 (MKSLLKRLIALAAAYSVAA) form the signal peptide. Residues Tyr92, Asn136, Ala137, Glu138, and Asn195 each contribute to the substrate site. Glu196 functions as the Proton donor in the catalytic mechanism. The N-linked (GlcNAc...) asparagine glycan is linked to Asn202. Tyr261 serves as a coordination point for substrate. A disulfide bridge connects residues Cys267 and Cys316. Glu299 serves as the catalytic Nucleophile. Residue Tyr365 coordinates substrate. Residues Asn406, Asn423, Asn446, Asn455, Asn588, Asn622, Asn704, Asn745, Asn759, Asn772, Asn778, and Asn913 are each glycosylated (N-linked (GlcNAc...) asparagine).

Belongs to the glycosyl hydrolase 35 family.

The protein localises to the secreted. It catalyses the reaction Hydrolysis of terminal non-reducing beta-D-galactose residues in beta-D-galactosides.. Cleaves beta-linked terminal galactosyl residues from gangliosides, glycoproteins, and glycosaminoglycans. The polypeptide is Probable beta-galactosidase E (lacE) (Aspergillus fumigatus (strain CBS 144.89 / FGSC A1163 / CEA10) (Neosartorya fumigata)).